The sequence spans 1160 residues: ATP-dependent helicase/deoxyribonuclease subunit B (1160 aa).

It belongs to the helicase family. AddB/RexB type 2 subfamily. As to quaternary structure, heterodimer of AddA and RexB. The cofactor is Mg(2+).

In terms of biological role, the heterodimer acts as both an ATP-dependent DNA helicase and an ATP-dependent, dual-direction single-stranded exonuclease. Recognizes the chi site generating a DNA molecule suitable for the initiation of homologous recombination. This subunit has 5' -&gt; 3' nuclease activity but not helicase activity. This is ATP-dependent helicase/deoxyribonuclease subunit B from Lactobacillus helveticus (strain DPC 4571).